Here is a 176-residue protein sequence, read N- to C-terminus: Isopentenyl-diphosphate Delta-isomerase (176 aa).

Histidine 23 and histidine 29 together coordinate Mn(2+). The 135-residue stretch at 27-161 folds into the Nudix hydrolase domain; the sequence is LRHLAISVFV…PERFTPWLKI (135 aa). Cysteine 63 is an active-site residue. Cysteine 63 serves as a coordination point for Mg(2+). Histidine 65 provides a ligand contact to Mn(2+). A Mg(2+)-binding site is contributed by glutamate 83. Mn(2+) contacts are provided by glutamate 109 and glutamate 111. Residue glutamate 111 is part of the active site.

The protein belongs to the IPP isomerase type 1 family. The cofactor is Mg(2+). Mn(2+) is required as a cofactor.

It localises to the cytoplasm. The enzyme catalyses isopentenyl diphosphate = dimethylallyl diphosphate. The protein operates within isoprenoid biosynthesis; dimethylallyl diphosphate biosynthesis; dimethylallyl diphosphate from isopentenyl diphosphate: step 1/1. Its pathway is porphyrin-containing compound metabolism; chlorophyll biosynthesis. Catalyzes the 1,3-allylic rearrangement of the homoallylic substrate isopentenyl (IPP) to its highly electrophilic allylic isomer, dimethylallyl diphosphate (DMAPP). In Rhodobacter capsulatus (strain ATCC BAA-309 / NBRC 16581 / SB1003), this protein is Isopentenyl-diphosphate Delta-isomerase.